The chain runs to 66 residues: Sodium channel neurotoxin MeuNaTxalpha-7 (66 aa).

The LCN-type CS-alpha/beta domain occupies 2–64; it reads RDGYIADDKN…VPIKVSGKCN (63 aa). 4 cysteine pairs are disulfide-bonded: Cys-12/Cys-63, Cys-16/Cys-36, Cys-22/Cys-46, and Cys-26/Cys-48. Position 64 is an asparagine amide (Asn-64).

It belongs to the long (4 C-C) scorpion toxin superfamily. Sodium channel inhibitor family. Alpha subfamily. As to expression, expressed by the venom gland.

The protein localises to the secreted. Alpha toxins bind voltage-independently at site-3 of sodium channels (Nav) and inhibit the inactivation of the activated channels, thereby blocking neuronal transmission. The polypeptide is Sodium channel neurotoxin MeuNaTxalpha-7 (Mesobuthus eupeus (Lesser Asian scorpion)).